A 100-amino-acid chain; its full sequence is Small ribosomal subunit protein uS14c (100 aa).

The segment at 1 to 31 (MARKSLIQREKKRQKLEQKYHSIRRSSKKEI) is disordered.

This sequence belongs to the universal ribosomal protein uS14 family. Part of the 30S ribosomal subunit.

It is found in the plastid. Its subcellular location is the chloroplast. In terms of biological role, binds 16S rRNA, required for the assembly of 30S particles. This is Small ribosomal subunit protein uS14c from Nicotiana tomentosiformis (Tobacco).